The chain runs to 459 residues: GTPase Der (459 aa).

EngA-type G domains follow at residues 4–169 (PLVA…PEVT) and 179–355 (IAVS…AAHR). GTP-binding positions include 10-17 (GRPNVGKS), 57-61 (DTGGL), 120-123 (NKCE), 185-192 (GRPNVGKS), 232-236 (DTAGI), and 297-300 (NKWD). The KH-like domain maps to 356–441 (KRVPTAVVNE…PIRFLWRGKS (86 aa)).

This sequence belongs to the TRAFAC class TrmE-Era-EngA-EngB-Septin-like GTPase superfamily. EngA (Der) GTPase family. In terms of assembly, associates with the 50S ribosomal subunit.

Functionally, GTPase that plays an essential role in the late steps of ribosome biogenesis. In Synechococcus sp. (strain JA-2-3B'a(2-13)) (Cyanobacteria bacterium Yellowstone B-Prime), this protein is GTPase Der.